The following is a 317-amino-acid chain: Ferrochelatase (317 aa).

Residues His-184 and Glu-259 each contribute to the Fe cation site.

This sequence belongs to the ferrochelatase family.

It localises to the cytoplasm. It carries out the reaction heme b + 2 H(+) = protoporphyrin IX + Fe(2+). It participates in porphyrin-containing compound metabolism; protoheme biosynthesis; protoheme from protoporphyrin-IX: step 1/1. Functionally, catalyzes the ferrous insertion into protoporphyrin IX. The polypeptide is Ferrochelatase (Chlamydia muridarum (strain MoPn / Nigg)).